The sequence spans 336 residues: Dihydroorotate dehydrogenase (quinone) (336 aa).

FMN contacts are provided by residues 62-66 (AGLDK) and T86. K66 is a substrate binding site. 111-115 (NRMGF) contributes to the substrate binding site. Residues N139 and N172 each coordinate FMN. N172 is a substrate binding site. The Nucleophile role is filled by S175. Residue N177 coordinates substrate. The FMN site is built by K217 and T245. 246–247 (NT) serves as a coordination point for substrate. FMN contacts are provided by residues G268, G297, and 318–319 (YS).

Belongs to the dihydroorotate dehydrogenase family. Type 2 subfamily. As to quaternary structure, monomer. FMN serves as cofactor.

Its subcellular location is the cell membrane. The catalysed reaction is (S)-dihydroorotate + a quinone = orotate + a quinol. The protein operates within pyrimidine metabolism; UMP biosynthesis via de novo pathway; orotate from (S)-dihydroorotate (quinone route): step 1/1. Functionally, catalyzes the conversion of dihydroorotate to orotate with quinone as electron acceptor. In Vibrio atlanticus (strain LGP32) (Vibrio splendidus (strain Mel32)), this protein is Dihydroorotate dehydrogenase (quinone).